A 270-amino-acid chain; its full sequence is Photosystem I chlorophyll a/b-binding protein 6, chloroplastic (270 aa).

A chloroplast-targeting transit peptide spans Met-1–Thr-33. The disordered stretch occupies residues Ser-16–Thr-36. The span at Arg-19–Thr-36 shows a compositional bias: polar residues. Chlorophyll b is bound at residue Trp-68. 2 residues coordinate chlorophyll a: Phe-88 and Glu-107. Residue Arg-112 participates in chlorophyll b binding. The chain crosses the membrane as a helical span at residues Tyr-146–Ala-164. Residues Glu-165 and Arg-168 each contribute to the chlorophyll b site. Residues Lys-221, Glu-222, Asn-225, Arg-227, Gln-239, and His-254 each contribute to the chlorophyll a site. The helical transmembrane segment at Leu-228 to Ser-244 threads the bilayer.

Belongs to the light-harvesting chlorophyll a/b-binding (LHC) protein family. As to quaternary structure, the LHC complex consists of chlorophyll a-b binding proteins. Homodimer. Binds pigments. Element of the NAD(P)H dehydrogenase-photosystem I supercomplex (NDH-PSI). Binds at least 14 chlorophylls (8 Chl-a and 6 Chl-b) and carotenoids such as lutein and neoxanthin. serves as cofactor. Photoregulated by reversible phosphorylation of its threonine residues.

It localises to the plastid. The protein resides in the chloroplast thylakoid membrane. Its function is as follows. The light-harvesting complex (LHC) functions as a light receptor, it captures and delivers excitation energy to photosystems with which it is closely associated. Seems involved in the function of the photosystem I in low light conditions, when other LHCA proteins are less abundant. Required, together with LHCA5, for the formation of a full-size NAD(P)H dehydrogenase-photosystem I supercomplex (NDH-PSI) that triggers cyclic and chlororespiratory electron transport in chloroplast thylakoids, especially under stress conditions (e.g. increased light intensity). This is Photosystem I chlorophyll a/b-binding protein 6, chloroplastic from Arabidopsis thaliana (Mouse-ear cress).